Consider the following 102-residue polypeptide: Aspartyl/glutamyl-tRNA(Asn/Gln) amidotransferase subunit C (102 aa).

The protein belongs to the GatC family. As to quaternary structure, heterotrimer of A, B and C subunits.

It carries out the reaction L-glutamyl-tRNA(Gln) + L-glutamine + ATP + H2O = L-glutaminyl-tRNA(Gln) + L-glutamate + ADP + phosphate + H(+). The enzyme catalyses L-aspartyl-tRNA(Asn) + L-glutamine + ATP + H2O = L-asparaginyl-tRNA(Asn) + L-glutamate + ADP + phosphate + 2 H(+). Its function is as follows. Allows the formation of correctly charged Asn-tRNA(Asn) or Gln-tRNA(Gln) through the transamidation of misacylated Asp-tRNA(Asn) or Glu-tRNA(Gln) in organisms which lack either or both of asparaginyl-tRNA or glutaminyl-tRNA synthetases. The reaction takes place in the presence of glutamine and ATP through an activated phospho-Asp-tRNA(Asn) or phospho-Glu-tRNA(Gln). This is Aspartyl/glutamyl-tRNA(Asn/Gln) amidotransferase subunit C from Bordetella parapertussis (strain 12822 / ATCC BAA-587 / NCTC 13253).